Reading from the N-terminus, the 221-residue chain is Protein-L-isoaspartate O-methyltransferase (221 aa).

The active site involves Ser64.

This sequence belongs to the methyltransferase superfamily. L-isoaspartyl/D-aspartyl protein methyltransferase family.

The protein localises to the cytoplasm. It carries out the reaction [protein]-L-isoaspartate + S-adenosyl-L-methionine = [protein]-L-isoaspartate alpha-methyl ester + S-adenosyl-L-homocysteine. In terms of biological role, catalyzes the methyl esterification of L-isoaspartyl residues in peptides and proteins that result from spontaneous decomposition of normal L-aspartyl and L-asparaginyl residues. It plays a role in the repair and/or degradation of damaged proteins. In Cytophaga hutchinsonii (strain ATCC 33406 / DSM 1761 / CIP 103989 / NBRC 15051 / NCIMB 9469 / D465), this protein is Protein-L-isoaspartate O-methyltransferase.